A 457-amino-acid chain; its full sequence is PE-PGRS family protein PE_PGRS18 (457 aa).

The region spanning 1 to 92 (MSFVNVAPQL…SSTYAVAEAA (92 aa)) is the PE domain. 4 NHL repeats span residues 291–321 (FNDP…IDPV), 333–363 (NGPS…IDPN), 379–404 (GVAV…IDPA), and 419–447 (PTGV…ITGE).

Belongs to the mycobacterial PE family. PGRS subfamily.

It localises to the secreted. It is found in the cell wall. Its function is as follows. Enhances mycobacterial intracellular survival, probably via altering host macrophage cytokine profiling and attenuating the cell apoptosis. Could be required for host endothelial-cell invasion. Expression in Mycobacterium smegmatis, a nonpathogenic species naturally deficient in PE_PGRS genes, results in alteration of the production of host cytokines, including IL-6, IL-1beta, IL-10 and IL-12p40, as well as enhanced survival within macrophages largely via attenuating the apoptosis of macrophages. This Mycobacterium tuberculosis (strain ATCC 25618 / H37Rv) protein is PE-PGRS family protein PE_PGRS18.